The following is a 2615-amino-acid chain: Polycystin-1-like protein 1 (2615 aa).

The Extracellular segment spans residues 1 to 1524 (MDVDEDQHAV…VSSISEFQSH (1524 aa)). Positions 17–93 (IQANPELCVS…GTNSFSNPPP (77 aa)) are disordered. 7 N-linked (GlcNAc...) asparagine glycosylation sites follow: N224, N297, N306, N390, N440, N534, and N619. PKD domains are found at residues 291–373 (SVSV…VQKR) and 375–456 (MANR…VREP). In terms of domain architecture, REJ spans 457–1349 (CQPPPVKNMG…GEEDYLHKRN (893 aa)). Residues 749-815 (SSKSDLPSNL…GEPMEEYSSL (67 aa)) form a disordered region. A compositionally biased stretch (polar residues) spans 778–789 (ALSNLGSISAES). Residues 1364 to 1512 (RFTGLSENSQ…SVLRRKLNAT (149 aa)) form the GAIN-B domain. N1458 is a glycosylation site (N-linked (GlcNAc...) asparagine). C1468 and C1494 are joined by a disulfide. Residues 1468–1512 (CVFWDKTEWRSEGPYPQPGSSPEKVNCSYHHLAPVSVLRRKLNAT) are GPS. An N-linked (GlcNAc...) asparagine glycan is attached at N1510. A helical membrane pass occupies residues 1525 to 1545 (PHNLLPGIFSAFLLVLYGILV). The Cytoplasmic segment spans residues 1546-1732 (SKSRYVDCHE…PPSRSYLHTQ (187 aa)). In terms of domain architecture, PLAT spans 1573 to 1690 (QLYAVVIDTG…LGGHVLREFF (118 aa)). The helical transmembrane segment at 1733 to 1753 (RLAVSFCLLCVYSCLTALVTV) threads the bilayer. The Extracellular segment spans residues 1754–1772 (RDHQQRPLDVGPTAITLEP). A helical transmembrane segment spans residues 1773–1793 (FCMALLCTLLACPVAQLLSLL). At 1794–1905 (FRCSKEARGD…ELGSQKSRVC (112 aa)) the chain is on the cytoplasmic side. The tract at residues 1807 to 1840 (STQWPLRGVKTETPQGHDSSGRPDSRQPSPHPTS) is disordered. The helical transmembrane segment at 1906–1926 (LLWSSSVAWAISGSASLACGL) threads the bilayer. Residues 1927 to 1950 (GTGFLGYWFVPAQCMWWLYLLLLS) are Extracellular-facing. Residues 1951–1971 (LVCCAFITQPLMICLAALVFA) form a helical membrane-spanning segment. Topologically, residues 1972–2057 (WKRKHDSKFF…ERLRRESIMQ (86 aa)) are cytoplasmic. Residues 2058–2078 (AALRDMTTHSIMLLLLLFIAY) form a helical membrane-spanning segment. The Extracellular segment spans residues 2079–2288 (GRFCPGEISL…IFYSDSALKY (210 aa)). A helical membrane pass occupies residues 2289–2309 (LLMLSELLFLVLNVIHLCFQL). Over 2310–2332 (WGMTTKGILSYWRKPRHWLELSM) the chain is Cytoplasmic. A helical membrane pass occupies residues 2333–2353 (VGVAIAYYAASGHLTTLAVNI). At 2354–2379 (TDQFHKGLYQRLVDIGLMVSWHQRAR) the chain is on the extracellular side. Residues 2380–2400 (CLQGILLFLWMLKYVHLLSSL) form a helical membrane-spanning segment. The Cytoplasmic segment spans residues 2401–2405 (STMTP). The chain crosses the membrane as a helical span at residues 2406–2426 (FSAVTCFPLFRVLLVGALLLA). Residues 2427–2483 (AHYHSRWFLLFTGTLSHGTSAEAFPGLLLQFPGRSKKDSWHNCLKSDHGVMRCYYGT) are Extracellular-facing. A helical membrane pass occupies residues 2484–2504 (LFLLLATLGFRMLRATFLTVF). At 2505–2615 (QNRKSSHRKP…VSGPLAAESE (111 aa)) the chain is on the cytoplasmic side. The tract at residues 2589–2615 (RAGDSPPVGSSEYQATGVSGPLAAESE) is disordered.

It belongs to the polycystin family. As to quaternary structure, heterodimer. Interacts with PKD2 to form a calcium channel. Interacts with PKD2L1; to form ciliary calcium channel. May interact with GNA12, GNAS, GNAI1 and GNAI2. As to expression, in testis, strong expression in Leydig cells, low level in seminal ducts, myoid cells and tunica vaginalis. Other tissues, including adrenal gland and heart myocardium, also show low expression. In embryo, highly expressed in the node.

The protein localises to the cell projection. It is found in the cilium membrane. In terms of biological role, component of a calcium-permeant ion channel formed by PKD1L2 and PKD1L1 in primary cilia, where it controls cilium calcium concentration, without affecting cytoplasmic calcium concentration, and regulates sonic hedgehog/SHH signaling and GLI2 transcription. The PKD1L1:PKD2L1 channel complex is mechanosensitive only at high pressures and is highly temperature sensitive. Also involved in left/right axis specification downstream of nodal flow by forming a complex with PKD2 in cilia to facilitate flow detection in left/right patterning. May function as a G-protein-coupled receptor. This Mus musculus (Mouse) protein is Polycystin-1-like protein 1.